The following is a 514-amino-acid chain: 2,3-bisphosphoglycerate-independent phosphoglycerate mutase (514 aa).

2 residues coordinate Mn(2+): aspartate 15 and serine 65. Serine 65 serves as the catalytic Phosphoserine intermediate. Residues histidine 126, 156–157 (RD), arginine 188, arginine 194, 261–264 (RADR), and lysine 335 each bind substrate. The Mn(2+) site is built by aspartate 403, histidine 407, aspartate 444, histidine 445, and histidine 462.

It belongs to the BPG-independent phosphoglycerate mutase family. As to quaternary structure, monomer. Requires Mn(2+) as cofactor.

It catalyses the reaction (2R)-2-phosphoglycerate = (2R)-3-phosphoglycerate. The protein operates within carbohydrate degradation; glycolysis; pyruvate from D-glyceraldehyde 3-phosphate: step 3/5. In terms of biological role, catalyzes the interconversion of 2-phosphoglycerate and 3-phosphoglycerate. This is 2,3-bisphosphoglycerate-independent phosphoglycerate mutase from Syntrophotalea carbinolica (strain DSM 2380 / NBRC 103641 / GraBd1) (Pelobacter carbinolicus).